Here is a 751-residue protein sequence, read N- to C-terminus: Meiotic sister-chromatid recombination protein 3 (751 aa).

Disordered stretches follow at residues 54 to 88 (GVGM…RTYS), 216 to 290 (LRAP…KKQM), 314 to 410 (PALE…EARF), 431 to 504 (TQEN…RPSF), and 558 to 610 (KDVP…SPPQ). Residues 216-228 (LRAPPRVQQQRQL) are compositionally biased toward low complexity. Basic and acidic residues-rich tracts occupy residues 345–356 (ERSRPAKREVRK) and 384–393 (ERVHNKEKTL). Over residues 431 to 496 (TQENSTRDNG…GCETGNTTPK (66 aa)) the composition is skewed to polar residues. A compositionally biased stretch (low complexity) spans 596-609 (RSSISSSPRRSSPP).

It localises to the cell membrane. In terms of biological role, may be involved in the control of meiotic sister-chromatid recombination. This is Meiotic sister-chromatid recombination protein 3 (MSC3) from Eremothecium gossypii (strain ATCC 10895 / CBS 109.51 / FGSC 9923 / NRRL Y-1056) (Yeast).